Reading from the N-terminus, the 96-residue chain is Large ribosomal subunit protein bL28 (96 aa).

The tract at residues 1 to 24 (MSRSCELTGKGVQSGHNVSHANNK) is disordered.

The protein belongs to the bacterial ribosomal protein bL28 family.

This Sinorhizobium fredii (strain NBRC 101917 / NGR234) protein is Large ribosomal subunit protein bL28.